A 229-amino-acid chain; its full sequence is Ribulose-phosphate 3-epimerase (229 aa).

Residue Ser13 participates in substrate binding. The a divalent metal cation site is built by His36, Asp38, and His69. Asp38 functions as the Proton acceptor in the catalytic mechanism. Residues His69, 145 to 148 (GFGG), 178 to 180 (DGG), and 200 to 201 (GS) contribute to the substrate site. Residue Asp178 coordinates a divalent metal cation. The Proton donor role is filled by Asp178.

Belongs to the ribulose-phosphate 3-epimerase family. A divalent metal cation serves as cofactor.

It catalyses the reaction D-ribulose 5-phosphate = D-xylulose 5-phosphate. It functions in the pathway carbohydrate degradation. Its function is as follows. Catalyzes the reversible epimerization of D-ribulose 5-phosphate to D-xylulose 5-phosphate. The chain is Ribulose-phosphate 3-epimerase from Mycobacterium bovis (strain ATCC BAA-935 / AF2122/97).